We begin with the raw amino-acid sequence, 184 residues long: Photosystem I assembly protein Ycf4 (184 aa).

2 helical membrane passes run 22–42 (FCWAFILFLGSLGFLLVGTSS) and 57–77 (IIFFPQGIVMSFYGIAGLFIS).

Belongs to the Ycf4 family.

The protein localises to the plastid. Its subcellular location is the chloroplast thylakoid membrane. Its function is as follows. Seems to be required for the assembly of the photosystem I complex. This is Photosystem I assembly protein Ycf4 from Crucihimalaya wallichii (Rock-cress).